Here is a 116-residue protein sequence, read N- to C-terminus: T cell receptor alpha variable 38-1 (116 aa).

The signal sequence occupies residues M1–A21. Positions Q22 to K116 constitute an Ig-like domain. A disulfide bridge connects residues C43 and C112. N-linked (GlcNAc...) asparagine glycosylation occurs at N78.

As to quaternary structure, alpha-beta TR is a heterodimer composed of an alpha and beta chain; disulfide-linked. The alpha-beta TR is associated with the transmembrane signaling CD3 coreceptor proteins to form the TR-CD3 (TcR or TCR). The assembly of alpha-beta TR heterodimers with CD3 occurs in the endoplasmic reticulum where a single alpha-beta TR heterodimer associates with one CD3D-CD3E heterodimer, one CD3G-CD3E heterodimer and one CD247 homodimer forming a stable octameric structure. CD3D-CD3E and CD3G-CD3E heterodimers preferentially associate with TR alpha and TR beta chains, respectively. The association of the CD247 homodimer is the last step of TcR assembly in the endoplasmic reticulum and is required for transport to the cell surface.

It localises to the cell membrane. In terms of biological role, v region of the variable domain of T cell receptor (TR) alpha chain that participates in the antigen recognition. Alpha-beta T cell receptors are antigen specific receptors which are essential to the immune response and are present on the cell surface of T lymphocytes. Recognize peptide-major histocompatibility (MH) (pMH) complexes that are displayed by antigen presenting cells (APC), a prerequisite for efficient T cell adaptive immunity against pathogens. Binding of alpha-beta TR to pMH complex initiates TR-CD3 clustering on the cell surface and intracellular activation of LCK that phosphorylates the ITAM motifs of CD3G, CD3D, CD3E and CD247 enabling the recruitment of ZAP70. In turn ZAP70 phosphorylates LAT, which recruits numerous signaling molecules to form the LAT signalosome. The LAT signalosome propagates signal branching to three major signaling pathways, the calcium, the mitogen-activated protein kinase (MAPK) kinase and the nuclear factor NF-kappa-B (NF-kB) pathways, leading to the mobilization of transcription factors that are critical for gene expression and essential for T cell growth and differentiation. The T cell repertoire is generated in the thymus, by V-(D)-J rearrangement. This repertoire is then shaped by intrathymic selection events to generate a peripheral T cell pool of self-MH restricted, non-autoaggressive T cells. Post-thymic interaction of alpha-beta TR with the pMH complexes shapes TR structural and functional avidity. The polypeptide is T cell receptor alpha variable 38-1 (Homo sapiens (Human)).